Reading from the N-terminus, the 195-residue chain is COMM domain-containing protein 3 (195 aa).

Positions 124 to 193 (HITDVSWRLE…DASKSLERAT (70 aa)) constitute a COMM domain.

Belongs to the COMM domain-containing protein 3 family. As to quaternary structure, component of the commander complex consisting of the CCC subcomplex and the retriever subcomplex. Component of the CCC (COMMD/CCDC22/CCDC93) subcomplex consisting of COMMD1, COMMD2, COMMD3, COMMD4, COMMD5, COMMD6, COMMD7, COMMD8, COMMD9, COMMD10, CCDC22 and CCDC93; within the complex forms a heterodimer with COMMD2. Interacts with NFKB1/p105. Interacts with CCDC22, CCDC93, SCNN1B, CUL3, CUL4A, CUL4B, CUL5.

The protein localises to the cytoplasm. It is found in the nucleus. In terms of biological role, scaffold protein in the commander complex that is essential for endosomal recycling of transmembrane cargos; the commander complex is composed of the CCC subcomplex and the retriever subcomplex. May modulate activity of cullin-RING E3 ubiquitin ligase (CRL) complexes. May down-regulate activation of NF-kappa-B. Modulates Na(+) transport in epithelial cells by regulation of apical cell surface expression of amiloride-sensitive sodium channel (ENaC) subunits. In Bos taurus (Bovine), this protein is COMM domain-containing protein 3 (COMMD3).